Here is a 323-residue protein sequence, read N- to C-terminus: Annexin A3 (323 aa).

Position 2 is an N-acetylalanine (A2). 4 Annexin repeats span residues 18 to 89 (FSPS…ALVT), 90 to 161 (PPAV…TLAD), 173 to 245 (HLAK…AIVN), and 249 to 320 (NTPA…KICG). The residue at position 267 (T267) is a Phosphothreonine.

It belongs to the annexin family.

Its function is as follows. Inhibitor of phospholipase A2, also possesses anti-coagulant properties. Also cleaves the cyclic bond of inositol 1,2-cyclic phosphate to form inositol 1-phosphate. The sequence is that of Annexin A3 (ANXA3) from Homo sapiens (Human).